Reading from the N-terminus, the 570-residue chain is Proline--tRNA ligase (570 aa).

The protein belongs to the class-II aminoacyl-tRNA synthetase family. ProS type 1 subfamily. As to quaternary structure, homodimer.

The protein localises to the cytoplasm. The catalysed reaction is tRNA(Pro) + L-proline + ATP = L-prolyl-tRNA(Pro) + AMP + diphosphate. Catalyzes the attachment of proline to tRNA(Pro) in a two-step reaction: proline is first activated by ATP to form Pro-AMP and then transferred to the acceptor end of tRNA(Pro). As ProRS can inadvertently accommodate and process non-cognate amino acids such as alanine and cysteine, to avoid such errors it has two additional distinct editing activities against alanine. One activity is designated as 'pretransfer' editing and involves the tRNA(Pro)-independent hydrolysis of activated Ala-AMP. The other activity is designated 'posttransfer' editing and involves deacylation of mischarged Ala-tRNA(Pro). The misacylated Cys-tRNA(Pro) is not edited by ProRS. In Clostridium perfringens (strain SM101 / Type A), this protein is Proline--tRNA ligase.